A 607-amino-acid polypeptide reads, in one-letter code: Replication factor C large subunit (607 aa).

Gly55–Thr62 contributes to the ATP binding site. The segment at Glu468–Phe607 is disordered. The span at Thr506–Asn518 shows a compositional bias: basic and acidic residues. Positions Ser548 to Lys558 are enriched in polar residues.

This sequence belongs to the activator 1 small subunits family. RfcL subfamily. As to quaternary structure, heteromultimer composed of small subunits (RfcS) and large subunits (RfcL).

Its function is as follows. Part of the RFC clamp loader complex which loads the PCNA sliding clamp onto DNA. The sequence is that of Replication factor C large subunit from Methanosarcina acetivorans (strain ATCC 35395 / DSM 2834 / JCM 12185 / C2A).